The primary structure comprises 163 residues: Globin CTT-V (163 aa).

The signal sequence occupies residues 1-16 (MKFFAVLTLCIIGAIA). Residues 18–163 (PLTSDEANLV…YTVAFEVIPA (146 aa)) enclose the Globin domain. 2 residues coordinate heme b: H76 and H111.

This sequence belongs to the globin family.

This Chironomus thummi piger (Midge) protein is Globin CTT-V (CTT-V).